Here is a 240-residue protein sequence, read N- to C-terminus: UDP-2,3-diacylglucosamine hydrolase (240 aa).

Mn(2+) contacts are provided by D8, H10, D41, N79, and H114. 79–80 (NR) contacts substrate. D122, S160, N164, K167, and H195 together coordinate substrate. H195 and H197 together coordinate Mn(2+).

Belongs to the LpxH family. Mn(2+) is required as a cofactor.

It localises to the cell inner membrane. The catalysed reaction is UDP-2-N,3-O-bis[(3R)-3-hydroxytetradecanoyl]-alpha-D-glucosamine + H2O = 2-N,3-O-bis[(3R)-3-hydroxytetradecanoyl]-alpha-D-glucosaminyl 1-phosphate + UMP + 2 H(+). It functions in the pathway glycolipid biosynthesis; lipid IV(A) biosynthesis; lipid IV(A) from (3R)-3-hydroxytetradecanoyl-[acyl-carrier-protein] and UDP-N-acetyl-alpha-D-glucosamine: step 4/6. Functionally, hydrolyzes the pyrophosphate bond of UDP-2,3-diacylglucosamine to yield 2,3-diacylglucosamine 1-phosphate (lipid X) and UMP by catalyzing the attack of water at the alpha-P atom. Involved in the biosynthesis of lipid A, a phosphorylated glycolipid that anchors the lipopolysaccharide to the outer membrane of the cell. The polypeptide is UDP-2,3-diacylglucosamine hydrolase (Escherichia coli O81 (strain ED1a)).